A 566-amino-acid polypeptide reads, in one-letter code: Serine/threonine-protein kinase PknE (566 aa).

The Cytoplasmic segment spans residues 1–337; it reads MDGTAESREG…PLPRSARQPW (337 aa). Ser-7 is modified (phosphoserine; by autocatalysis). A Phosphothreonine; by autocatalysis modification is found at Thr-11. A Protein kinase domain is found at 16–275; the sequence is YRLRRLVGRG…DLSAAAHAAL (260 aa). ATP-binding positions include 22-30 and Lys-45; that span reads VGRGGMGDV. A phosphothreonine; by autocatalysis mark is found at Thr-50 and Thr-59. The active-site Proton acceptor is Asp-139. Residues Thr-170, Thr-175, and Thr-178 each carry the phosphothreonine; by autocatalysis modification. The tract at residues 296–330 is disordered; it reads PVPSTHPVSPGTRWPQPTPWAGGAPPWGPPSSPLP. Residues 338–358 form a helical membrane-spanning segment; it reads LWVGVAVAVVVALAGGLGIAL. At 359-566 the chain is on the extracellular side; it reads AHPWRSSGPR…DPSWLARLIG (208 aa).

Belongs to the protein kinase superfamily. Ser/Thr protein kinase family. Post-translationally, autophosphorylated on serine and threonine residues. Dephosphorylated by PstP.

Its subcellular location is the cell membrane. The enzyme catalyses L-seryl-[protein] + ATP = O-phospho-L-seryl-[protein] + ADP + H(+). It catalyses the reaction L-threonyl-[protein] + ATP = O-phospho-L-threonyl-[protein] + ADP + H(+). The protein is Serine/threonine-protein kinase PknE (pknE) of Mycobacterium bovis (strain ATCC BAA-935 / AF2122/97).